The primary structure comprises 416 residues: Protein-lysine N-trimethyltransferase SMYD5 (416 aa).

An SET domain is found at 21–351 (GSVEVRYVDS…PGEEICISYL (331 aa)). The segment at 98–136 (PELCSVRKDLHQNCPHCQVMYCSAECRLAAAEQYHQILC) adopts an MYND-type zinc-finger fold. Tyr350 contacts S-adenosyl-L-methionine. The interval 383–416 (EADDPNVTSEEEEEEDEEEGEPEDAELGDEMTDV) is disordered.

This sequence belongs to the class V-like SAM-binding methyltransferase superfamily. Interacts with the N-CoR complex. Interacts with EHMT2 and CBX5. Ubiquitinated and degradaed by the proteasome in response to mild hypothermia (32 degrees Celsius), relieving repression of the SP1 gene.

The protein localises to the cytoplasm. The enzyme catalyses L-lysyl-[protein] + 3 S-adenosyl-L-methionine = N(6),N(6),N(6)-trimethyl-L-lysyl-[protein] + 3 S-adenosyl-L-homocysteine + 3 H(+). It carries out the reaction L-lysyl(20)-[histone H4] + 3 S-adenosyl-L-methionine = N(6),N(6),N(6)-trimethyl-L-lysyl(20)-[histone H4] + 3 S-adenosyl-L-homocysteine + 3 H(+). It catalyses the reaction L-lysyl(36)-[histone H3] + 3 S-adenosyl-L-methionine = N(6),N(6),N(6)-trimethyl-L-lysyl(36)-[histone H3] + 3 S-adenosyl-L-homocysteine + 3 H(+). Protein-lysine N-trimethyltransferase that specifically catalyzes trimethylation of 'Lys-22' of the RPL40/eL40 subunit of the 60S ribosome, thereby promoting translation elongation and protein synthesis. May also act as a histone methyltransferase in the context of histone octamers, but not on nucleosome substrates: trimethylates 'Lys-36' of histone H3 and 'Lys-20' of histone H4 to form H3K36me3 and H4K20me3, respectively. The histone methyltransferase activity, which is independent of its SET domain, is however unsure in vivo. In association with the NCoR corepressor complex, involved in the repression of toll-like receptor 4 (TLR4)-target inflammatory genes in macrophages, possibly by catalyzing the formation of H4K20me3 at the gene promoters. Plays an important role in embryonic stem (ES) cell self-renewal and differentiation. Maintains genome stability of ES cells during differentiation through regulation of heterochromatin formation and repression of endogenous repetitive DNA elements by promoting H4K20me3 marks. Acts as a regulator of the hypothermia response: its degradation in response to mild hypothermia relieves the formation of H3K36me3 at gene promoters, allowing expression of the neuroprotective gene SP1. The sequence is that of Protein-lysine N-trimethyltransferase SMYD5 from Mus musculus (Mouse).